We begin with the raw amino-acid sequence, 150 residues long: Avidin-related protein 4/5 (150 aa).

The first 24 residues, 1–24, serve as a signal peptide directing secretion; the sequence is MVHTTSPLLLLLLLSLALVAPSLS. Residues 26-147 enclose the Avidin-like domain; that stretch reads RKCSLTGKWT…GYNNFTRLCT (122 aa). Residues C28 and C105 are joined by a disulfide bond. Biotin is bound by residues N36, S40, Y57, T59, and D63. N-linked (GlcNAc...) asparagine glycans are attached at residues N67 and N93. Biotin-binding residues include S95 and N140. N141 is a glycosylation site (N-linked (GlcNAc...) asparagine).

The protein belongs to the avidin/streptavidin family. In terms of assembly, homotetramer.

It localises to the secreted. In terms of biological role, forms a strong non-covalent specific complex with biotin. This is Avidin-related protein 4/5 (AVR4) from Gallus gallus (Chicken).